Consider the following 282-residue polypeptide: MSFSGHSARKRFGQHWLKDVAILEKIVEAAELCENDRVLEIGPGRGALTHKLLNSKVSLVHAIELDTDLVVGLRERFFHETRFSLKGGDALKISLLPPDGIEVNKVVANIPYNITSPLLERLIGKLGFFPETRYERLVLLLQKEVADRILAMPGQSSFSAMSVRVQLLCKSRSVCDVSPKCFKPSPKVHSKVVVIEPFAFSERLNVDIEKRVESLLRTAFLGRRKKLRNTLASIRPLNQLESLADQLGISLNQRPQEISPMMWVSLAKRIHDMDKLVGEIQS.

S-adenosyl-L-methionine-binding residues include histidine 15, leucine 17, glycine 42, glutamate 64, aspartate 89, and asparagine 109.

This sequence belongs to the class I-like SAM-binding methyltransferase superfamily. rRNA adenine N(6)-methyltransferase family. RsmA subfamily.

The protein resides in the cytoplasm. It catalyses the reaction adenosine(1518)/adenosine(1519) in 16S rRNA + 4 S-adenosyl-L-methionine = N(6)-dimethyladenosine(1518)/N(6)-dimethyladenosine(1519) in 16S rRNA + 4 S-adenosyl-L-homocysteine + 4 H(+). In terms of biological role, specifically dimethylates two adjacent adenosines (A1518 and A1519) in the loop of a conserved hairpin near the 3'-end of 16S rRNA in the 30S particle. May play a critical role in biogenesis of 30S subunits. This chain is Ribosomal RNA small subunit methyltransferase A, found in Prochlorococcus marinus (strain MIT 9211).